Reading from the N-terminus, the 309-residue chain is Epidermal retinol dehydrogenase 2 (309 aa).

The chain crosses the membrane as a helical span at residues 11 to 31 (LLVFLGKSLLSVLEALLFHVI). 44 to 68 (LITGAGSGLGRLLALQFARLGAVLV) is a binding site for NADP(+). Ser177 serves as a coordination point for substrate. Tyr190 functions as the Proton acceptor in the catalytic mechanism. The helical transmembrane segment at 270–290 (FLYFIVFLKSILPIKTGILIA) threads the bilayer.

Belongs to the short-chain dehydrogenases/reductases (SDR) family.

The protein localises to the endoplasmic reticulum membrane. The catalysed reaction is all-trans-retinol--[retinol-binding protein] + NAD(+) = all-trans-retinal--[retinol-binding protein] + NADH + H(+). It functions in the pathway cofactor metabolism; retinol metabolism. Oxidoreductase with strong preference for NAD. Active in both the oxidative and reductive directions. Oxidizes all-trans-retinol in all-trans-retinaldehyde. No activity was detected with 11-cis-retinol or 11-cis-retinaldehyde as substrates with either NAD(+)/NADH or NADP(+)/NADPH. The sequence is that of Epidermal retinol dehydrogenase 2 from Mus musculus (Mouse).